Here is a 526-residue protein sequence, read N- to C-terminus: Clostripain (526 aa).

A signal peptide spans 1–27 (MLRRKVSTLLMTALITTSFLNSKPVYA). Positions 28-50 (NPVTKSKDNNLKEVQQVTSKSNK) are excised as a propeptide. Residues 182–190 (EKSNPRLNR) constitute a propeptide, linker. Cys231 (nucleophile) is an active-site residue.

This sequence belongs to the peptidase C11 family. In terms of assembly, heterodimer of a light chain and a heavy chain held together by strong non-covalent forces rather than by intramolecular disulfide bridges.

The enzyme catalyses Preferential cleavage: Arg-|-Xaa, including Arg-|-Pro bond, but not Lys-|-Xaa.. Functionally, cysteine endopeptidase with strict specificity. The chain is Clostripain (cloSI) from Hathewaya histolytica (Clostridium histolyticum).